Here is a 239-residue protein sequence, read N- to C-terminus: tRNA (guanine-N(1)-)-methyltransferase (239 aa).

S-adenosyl-L-methionine-binding positions include G108 and 127–132 (LGDFVL).

This sequence belongs to the RNA methyltransferase TrmD family. In terms of assembly, homodimer.

The protein resides in the cytoplasm. The catalysed reaction is guanosine(37) in tRNA + S-adenosyl-L-methionine = N(1)-methylguanosine(37) in tRNA + S-adenosyl-L-homocysteine + H(+). Specifically methylates guanosine-37 in various tRNAs. The chain is tRNA (guanine-N(1)-)-methyltransferase from Streptococcus pyogenes serotype M6 (strain ATCC BAA-946 / MGAS10394).